A 170-amino-acid polypeptide reads, in one-letter code: Acetyl-CoA decarbonylase/synthase complex subunit epsilon 2 (170 aa).

This sequence belongs to the CdhB family. As to quaternary structure, heterotetramer of two alpha and two epsilon subunits. The ACDS complex is made up of alpha, epsilon, beta, gamma and delta subunits with a probable stoichiometry of (alpha(2)epsilon(2))(4)-beta(8)-(gamma(1)delta(1))(8).

It participates in one-carbon metabolism; methanogenesis from acetate. Its function is as follows. Part of a complex that catalyzes the reversible cleavage of acetyl-CoA, allowing growth on acetate as sole source of carbon and energy. The alpha-epsilon subcomponent functions as a carbon monoxide dehydrogenase. The precise role of the epsilon subunit is unclear; it may have a stabilizing role within the alpha(2)epsilon(2) component and/or be involved in electron transfer to FAD during a potential FAD-mediated CO oxidation. The sequence is that of Acetyl-CoA decarbonylase/synthase complex subunit epsilon 2 (cdhB2) from Methanosarcina thermophila.